The chain runs to 249 residues: Ribosomal RNA small subunit methyltransferase J (249 aa).

S-adenosyl-L-methionine is bound by residues 99–100 (RD), 115–116 (ER), 151–152 (SS), and Asp-169.

The protein belongs to the methyltransferase superfamily. RsmJ family.

The protein localises to the cytoplasm. It catalyses the reaction guanosine(1516) in 16S rRNA + S-adenosyl-L-methionine = N(2)-methylguanosine(1516) in 16S rRNA + S-adenosyl-L-homocysteine + H(+). In terms of biological role, specifically methylates the guanosine in position 1516 of 16S rRNA. The polypeptide is Ribosomal RNA small subunit methyltransferase J (Shewanella oneidensis (strain ATCC 700550 / JCM 31522 / CIP 106686 / LMG 19005 / NCIMB 14063 / MR-1)).